The sequence spans 295 residues: Glycine N-methyltransferase (295 aa).

Residues S4 and Y6 each contribute to the (6S)-5-methyl-5,6,7,8-tetrahydrofolate site. S10 carries the phosphoserine modification. Y22, W31, Y34, and R41 together coordinate S-adenosyl-L-methionine. A Phosphotyrosine modification is found at Y34. K46 carries the N6-succinyllysine modification. Residues A65, 86–88 (DAS), 117–118 (NW), 139–142 (LGNS), and R178 each bind S-adenosyl-L-methionine. Residues K193, K198, and K203 each carry the N6-succinyllysine modification. A (6S)-5-methyl-5,6,7,8-tetrahydrofolate-binding site is contributed by H217. Y223 is a binding site for S-adenosyl-L-methionine. R242 serves as a coordination point for (6S)-5-methyl-5,6,7,8-tetrahydrofolate.

It belongs to the class I-like SAM-binding methyltransferase superfamily. Glycine N-methyltransferase family. As to quaternary structure, homotetramer. Abundant in liver.

It is found in the cytoplasm. It catalyses the reaction glycine + S-adenosyl-L-methionine = sarcosine + S-adenosyl-L-homocysteine + H(+). With respect to regulation, inhibited by 5-methyltetrahydrofolate monoglutamate and by 5-methyltetrahydrofolate pentaglutamate, inhibition is much more effective by the pentaglutamate form than by the monoglutamate form. Two molecules of 5-methyltetrahydrofolate are bound per tetramer. The binding sites are localized between subunits. Inhibitor binding may preclude movements of the polypeptide chain that are necessary for enzyme activity. Its function is as follows. Catalyzes the methylation of glycine by using S-adenosylmethionine (AdoMet) to form N-methylglycine (sarcosine) with the concomitant production of S-adenosylhomocysteine (AdoHcy), a reaction regulated by the binding of 5-methyltetrahydrofolate. Plays an important role in the regulation of methyl group metabolism by regulating the ratio between S-adenosyl-L-methionine and S-adenosyl-L-homocysteine. This is Glycine N-methyltransferase (GNMT) from Oryctolagus cuniculus (Rabbit).